The following is a 265-amino-acid chain: MKATTMSHLRQWKLEKRKFATLTAYDASFAQLFAEQGIEVLLVGDSLGMTLQGFDSTLPVTTADVAYHTRAVRRGAPHCLLLADMPFMSYATPEQTFANAAELMRAGANMVKLEGGSWLCDTVRMLAERAVPVCGHLGLTPQSVNIFGGYKVQGREEVAANQLLKDAQALENAGAQLLVLECVPVELAQRVTEALAIPVIGIGAGNVTDGQILVMHDALGITGGHTPKFSKNFLAQSAGDIRAAIKLYIQEVESGAYPAEEHTFQ.

Mg(2+)-binding residues include D45 and D84. Residues 45–46, D84, and K112 each bind 3-methyl-2-oxobutanoate; that span reads DS. E114 is a Mg(2+) binding site. The active-site Proton acceptor is E181.

It belongs to the PanB family. As to quaternary structure, homodecamer; pentamer of dimers. Mg(2+) serves as cofactor.

It localises to the cytoplasm. The catalysed reaction is 3-methyl-2-oxobutanoate + (6R)-5,10-methylene-5,6,7,8-tetrahydrofolate + H2O = 2-dehydropantoate + (6S)-5,6,7,8-tetrahydrofolate. It functions in the pathway cofactor biosynthesis; (R)-pantothenate biosynthesis; (R)-pantoate from 3-methyl-2-oxobutanoate: step 1/2. Catalyzes the reversible reaction in which hydroxymethyl group from 5,10-methylenetetrahydrofolate is transferred onto alpha-ketoisovalerate to form ketopantoate. The polypeptide is 3-methyl-2-oxobutanoate hydroxymethyltransferase (Yersinia enterocolitica serotype O:8 / biotype 1B (strain NCTC 13174 / 8081)).